The primary structure comprises 162 residues: MKLNFLVTTVALLVAFPPPYECRAIDSSSNQPATDPDGERQSAPVLARLGEEYFIRLGNRYQNSLRSSPDTYPETSQYPKRALQLQLTQRLLEGKVGNVGRWDGNYALRALDSEERERRSEEPPISLDLTFHLLREVLEMARAEQLAQQAHSNRKMMEIFGK.

Positions 1 to 24 (MKLNFLVTTVALLVAFPPPYECRA) are cleaved as a signal peptide. Residues 25 to 119 (IDSSSNQPAT…ALDSEERERR (95 aa)) constitute a propeptide that is removed on maturation. Phenylalanine 160 carries the post-translational modification Phenylalanine amide.

Belongs to the sauvagine/corticotropin-releasing factor/urotensin I family.

It is found in the secreted. Functionally, this hormone from hypothalamus regulates the release of corticotropin from pituitary gland. This Catostomus commersonii (White sucker) protein is Corticoliberin-1 (crf1).